A 489-amino-acid chain; its full sequence is tRNA(Ile)-lysidine synthase (489 aa).

35-40 (SGGLDS) is an ATP binding site.

Belongs to the tRNA(Ile)-lysidine synthase family.

The protein localises to the cytoplasm. It carries out the reaction cytidine(34) in tRNA(Ile2) + L-lysine + ATP = lysidine(34) in tRNA(Ile2) + AMP + diphosphate + H(+). In terms of biological role, ligates lysine onto the cytidine present at position 34 of the AUA codon-specific tRNA(Ile) that contains the anticodon CAU, in an ATP-dependent manner. Cytidine is converted to lysidine, thus changing the amino acid specificity of the tRNA from methionine to isoleucine. The chain is tRNA(Ile)-lysidine synthase from Burkholderia mallei (strain ATCC 23344).